We begin with the raw amino-acid sequence, 447 residues long: Tryptophan 5-hydroxylase 1 (447 aa).

The 76-residue stretch at Thr-22–Gln-97 folds into the ACT domain. At Ser-61 the chain carries Phosphoserine; by PKA. Tyr-238, Arg-260, and Thr-268 together coordinate L-tryptophan. The Fe cation site is built by His-275, His-280, and Glu-320. L-tryptophan is bound by residues Ser-339 and Ile-369.

Belongs to the biopterin-dependent aromatic amino acid hydroxylase family. In terms of assembly, homotetramer. Interacts with DNAJC12. Fe(2+) serves as cofactor. Ubiquitinated, leading to its degradation by the proteasome. Ubiquitinated is triggered by phosphorylation. In terms of processing, phosphorylated; triggering degradation by the proteasome.

The enzyme catalyses (6R)-L-erythro-5,6,7,8-tetrahydrobiopterin + L-tryptophan + O2 = 5-hydroxy-L-tryptophan + (4aS,6R)-4a-hydroxy-L-erythro-5,6,7,8-tetrahydrobiopterin. The protein operates within aromatic compound metabolism; serotonin biosynthesis; serotonin from L-tryptophan: step 1/2. Its function is as follows. Oxidizes L-tryptophan to 5-hydroxy-l-tryptophan in the rate-determining step of serotonin biosynthesis. This Mus musculus (Mouse) protein is Tryptophan 5-hydroxylase 1.